A 289-amino-acid polypeptide reads, in one-letter code: Enoyl-CoA delta isomerase 1, mitochondrial (289 aa).

A mitochondrion-targeting transit peptide spans 1 to 28 (MALAAARRVLLQAGSRLGRRGAVDGARR). K48 is modified (N6-acetyllysine; alternate). K48 is modified (N6-succinyllysine; alternate). K71 carries the N6-succinyllysine modification. K76 is subject to N6-acetyllysine. Substrate is bound by residues 93–97 (AGLDL), G140, and N164. An N6-acetyllysine; alternate mark is found at K222, K229, and K255. N6-succinyllysine; alternate occurs at positions 222, 229, and 255. K275 carries the N6-succinyllysine modification. At K283 the chain carries N6-acetyllysine; alternate. K283 is modified (N6-succinyllysine; alternate).

The protein belongs to the enoyl-CoA hydratase/isomerase family. Homotrimer.

The protein localises to the mitochondrion matrix. The enzyme catalyses a (3Z)-enoyl-CoA = a 4-saturated (2E)-enoyl-CoA. It carries out the reaction a (3E)-enoyl-CoA = a 4-saturated (2E)-enoyl-CoA. The catalysed reaction is (3Z)-octenoyl-CoA = (2E)-octenoyl-CoA. It catalyses the reaction (2E)-tetradecenoyl-CoA = (3Z)-tetradecenoyl-CoA. The enzyme catalyses (3Z)-dodecenoyl-CoA = (2E)-dodecenoyl-CoA. It carries out the reaction (3Z)-hexenoyl-CoA = (2E)-hexenoyl-CoA. The catalysed reaction is (3Z)-decenoyl-CoA = (2E)-decenoyl-CoA. The protein operates within lipid metabolism; fatty acid beta-oxidation. Its function is as follows. Key enzyme of fatty acid beta-oxidation. Able to isomerize both 3-cis (3Z) and 3-trans (3E) double bonds into the 2-trans (2E) form in a range of enoyl-CoA species, with a preference for (3Z)-enoyl-CoAs over (3E)-enoyl-CoAs. The catalytic efficiency of this enzyme is not affected by the fatty acyl chain length. In Rattus norvegicus (Rat), this protein is Enoyl-CoA delta isomerase 1, mitochondrial.